Here is a 489-residue protein sequence, read N- to C-terminus: Rhamnulokinase (489 aa).

13-17 (ASSGR) lines the ATP pocket. Cysteines 68 and 222 form a disulfide. Substrate is bound by residues Gly-83 and 236–238 (HDT). Asp-237 acts as the Proton acceptor in catalysis. Thr-259 is an ATP binding site. Asn-296 provides a ligand contact to substrate. Gln-304 provides a ligand contact to ATP. Cys-353 and Cys-370 are disulfide-bonded. Gly-402 serves as a coordination point for ATP. Cys-413 and Cys-417 are joined by a disulfide.

This sequence belongs to the rhamnulokinase family. The cofactor is Mg(2+).

It catalyses the reaction L-rhamnulose + ATP = L-rhamnulose 1-phosphate + ADP + H(+). It participates in carbohydrate degradation; L-rhamnose degradation; glycerone phosphate from L-rhamnose: step 2/3. Involved in the catabolism of L-rhamnose (6-deoxy-L-mannose). Catalyzes the transfer of the gamma-phosphate group from ATP to the 1-hydroxyl group of L-rhamnulose to yield L-rhamnulose 1-phosphate. The polypeptide is Rhamnulokinase (Salmonella enteritidis PT4 (strain P125109)).